We begin with the raw amino-acid sequence, 586 residues long: Guanylate-binding protein 5 (586 aa).

Residues 1–306 (MALEIHMSDP…TYVNAISSGD (306 aa)) form an NLRP3-binding region. Positions 1–309 (MALEIHMSDP…NAISSGDLPC (309 aa)) are GTPase domain (Globular). Positions 35–276 (TQPVVVVAIV…FCSYIFSHSM (242 aa)) constitute a GB1/RHD3-type G domain. Residues 45–52 (GLYRTGKS), 67–69 (VAS), 181–182 (RD), and Leu-245 each bind GTP. The interval 529–586 (MEIAKQNWLAEQQKMQEQQMQEQAAQLSTTFQAQNRSLLSELQHAQRTVNNDDPCVLL) is required for tetramerization, but not for dimerization. A Cysteine methyl ester modification is found at Cys-583. Cys-583 is lipidated: S-geranylgeranyl cysteine. Residues 584–586 (VLL) constitute a propeptide, removed in mature form.

It belongs to the TRAFAC class dynamin-like GTPase superfamily. GB1/RHD3 GTPase family. GB1 subfamily. In terms of assembly, homodimer; homodimerizes upon GTP-binding, forming a close face-to-face dimer. Heterodimer with other family members, including GBP1, GBP2, GBP3 and GBP4. May also form tetramers (dimer of dimers) in the presence of GTP. Interacts with NLRP3, possibly in its tetrameric form, and promotes PYCARD/ASC polymerization. As to quaternary structure, homodimer; homodimerizes upon GTP-binding. GDP-bound form remains homodimeric. Homodimer; homodimerizes upon GTP-binding. GDP-bound is monomeric. In terms of processing, isoprenylation is required for proper subcellular location. In terms of tissue distribution, expressed in peripheral blood monocytes (at protein level).

Its subcellular location is the cytoplasmic vesicle membrane. It localises to the golgi apparatus membrane. The protein localises to the cytoplasm. The enzyme catalyses GTP + H2O = GDP + phosphate + H(+). In terms of biological role, interferon (IFN)-inducible GTPase that plays important roles in innate immunity against a diverse range of bacterial, viral and protozoan pathogens. Hydrolyzes GTP, but in contrast to other family members, does not produce GMP. Following infection, recruited to the pathogen-containing vacuoles or vacuole-escaped bacteria and acts as a positive regulator of inflammasome assembly by promoting the release of inflammasome ligands from bacteria. Acts by promoting lysis of pathogen-containing vacuoles, releasing pathogens into the cytosol. Following pathogen release in the cytosol, promotes recruitment of proteins that mediate bacterial cytolysis: this liberates ligands that are detected by inflammasomes, such as lipopolysaccharide (LPS) that activates the non-canonical CASP4/CASP11 inflammasome or double-stranded DNA (dsDNA) that activates the AIM2 inflammasome. As an activator of NLRP3 inflammasome assembly: promotes selective NLRP3 inflammasome assembly in response to microbial and soluble, but not crystalline, agents. Independently of its GTPase activity, acts as an inhibitor of various viruses infectivity, such as HIV-1, Zika and influenza A viruses, by inhibiting FURIN-mediated maturation of viral envelope proteins. Functionally, antigenic tumor-specific truncated splice form. In Homo sapiens (Human), this protein is Guanylate-binding protein 5.